The primary structure comprises 133 residues: UPF0134 protein MPN_151 (133 aa).

It belongs to the UPF0134 family.

The chain is UPF0134 protein MPN_151 from Mycoplasma pneumoniae (strain ATCC 29342 / M129 / Subtype 1) (Mycoplasmoides pneumoniae).